Reading from the N-terminus, the 959-residue chain is Translation initiation factor IF-2 (959 aa).

The disordered stretch occupies residues Ser-33 to Leu-373. A compositionally biased stretch (polar residues) spans Ile-46–Ala-60. Residues Ala-63 to Ala-73 show a composition bias toward basic and acidic residues. A compositionally biased stretch (low complexity) spans Ala-76–Ser-100. 3 stretches are compositionally biased toward basic and acidic residues: residues Phe-112 to Ala-125, Ser-134 to Gln-143, and Asn-179 to Arg-192. Residues Ser-193–Ala-211 show a composition bias toward polar residues. 2 stretches are compositionally biased toward basic and acidic residues: residues Ala-234–Ala-258 and Gln-266–Pro-276. Residues Ala-277–Ala-287 show a composition bias toward low complexity. A compositionally biased stretch (basic and acidic residues) spans Asn-306 to Lys-323. Residues Ser-328–Asn-346 are compositionally biased toward low complexity. Residues Lys-347–Asn-357 show a composition bias toward basic residues. In terms of domain architecture, tr-type G spans Glu-460–Lys-629. A G1 region spans residues Gly-469 to Thr-476. Gly-469–Thr-476 contributes to the GTP binding site. Positions Gly-494 to His-498 are G2. The G3 stretch occupies residues Asp-515 to Gly-518. GTP is bound by residues Asp-515–His-519 and Asn-569–Asp-572. The tract at residues Asn-569 to Asp-572 is G4. Residues Ser-605 to Lys-607 are G5.

This sequence belongs to the TRAFAC class translation factor GTPase superfamily. Classic translation factor GTPase family. IF-2 subfamily.

The protein resides in the cytoplasm. Its function is as follows. One of the essential components for the initiation of protein synthesis. Protects formylmethionyl-tRNA from spontaneous hydrolysis and promotes its binding to the 30S ribosomal subunits. Also involved in the hydrolysis of GTP during the formation of the 70S ribosomal complex. This is Translation initiation factor IF-2 from Streptococcus equi subsp. zooepidemicus (strain H70).